Consider the following 401-residue polypeptide: Chaperone protein DnaJ (401 aa).

Positions 4–69 (DYYEVLGVSR…DKRRRYDQFG (66 aa)) constitute a J domain. Residues 156 to 237 (GVEKTLKIKK…CYGEGIKQGD (82 aa)) form a CR-type zinc finger. Cysteine 169, cysteine 172, cysteine 185, cysteine 188, cysteine 211, cysteine 214, cysteine 225, and cysteine 228 together coordinate Zn(2+). CXXCXGXG motif repeat units lie at residues 169–176 (CKECNGSG), 185–192 (CQTCHGSG), 211–218 (CPTCGGEG), and 225–232 (CTACYGEG). A disordered region spans residues 377 to 401 (AFSPSGSNNDKEEKSFFEKARDIFS). Residues 385–401 (NDKEEKSFFEKARDIFS) are compositionally biased toward basic and acidic residues.

The protein belongs to the DnaJ family. Homodimer. The cofactor is Zn(2+).

It localises to the cytoplasm. In terms of biological role, participates actively in the response to hyperosmotic and heat shock by preventing the aggregation of stress-denatured proteins and by disaggregating proteins, also in an autonomous, DnaK-independent fashion. Unfolded proteins bind initially to DnaJ; upon interaction with the DnaJ-bound protein, DnaK hydrolyzes its bound ATP, resulting in the formation of a stable complex. GrpE releases ADP from DnaK; ATP binding to DnaK triggers the release of the substrate protein, thus completing the reaction cycle. Several rounds of ATP-dependent interactions between DnaJ, DnaK and GrpE are required for fully efficient folding. Also involved, together with DnaK and GrpE, in the DNA replication of plasmids through activation of initiation proteins. This chain is Chaperone protein DnaJ, found in Chlorobium limicola (strain DSM 245 / NBRC 103803 / 6330).